The primary structure comprises 448 residues: UDP-N-acetylmuramoylalanine--D-glutamate ligase (448 aa).

116–122 (GSNAKST) provides a ligand contact to ATP.

The protein belongs to the MurCDEF family.

Its subcellular location is the cytoplasm. The enzyme catalyses UDP-N-acetyl-alpha-D-muramoyl-L-alanine + D-glutamate + ATP = UDP-N-acetyl-alpha-D-muramoyl-L-alanyl-D-glutamate + ADP + phosphate + H(+). It participates in cell wall biogenesis; peptidoglycan biosynthesis. Its function is as follows. Cell wall formation. Catalyzes the addition of glutamate to the nucleotide precursor UDP-N-acetylmuramoyl-L-alanine (UMA). This Pseudomonas syringae pv. syringae (strain B728a) protein is UDP-N-acetylmuramoylalanine--D-glutamate ligase.